Reading from the N-terminus, the 385-residue chain is Methylthioribose-1-phosphate isomerase (385 aa).

D255 serves as the catalytic Proton donor.

This sequence belongs to the eIF-2B alpha/beta/delta subunits family. MtnA subfamily.

Its subcellular location is the cytoplasm. It localises to the nucleus. The enzyme catalyses 5-(methylsulfanyl)-alpha-D-ribose 1-phosphate = 5-(methylsulfanyl)-D-ribulose 1-phosphate. It participates in amino-acid biosynthesis; L-methionine biosynthesis via salvage pathway; L-methionine from S-methyl-5-thio-alpha-D-ribose 1-phosphate: step 1/6. Its function is as follows. Catalyzes the interconversion of methylthioribose-1-phosphate (MTR-1-P) into methylthioribulose-1-phosphate (MTRu-1-P). This chain is Methylthioribose-1-phosphate isomerase (mri1), found in Aspergillus clavatus (strain ATCC 1007 / CBS 513.65 / DSM 816 / NCTC 3887 / NRRL 1 / QM 1276 / 107).